We begin with the raw amino-acid sequence, 393 residues long: Riboflavin biosynthesis protein RibBA (393 aa).

The DHBP synthase stretch occupies residues 1–200 (MQFDNIDSAL…IDDLIEYRKK (200 aa)). Residues 27 to 28 (RE), D32, 139 to 143 (RNGHT), and E163 contribute to the D-ribulose 5-phosphate site. E28 lines the Mg(2+) pocket. Position 142 (H142) interacts with Mg(2+). The tract at residues 201–393 (LEPEIEFKAK…TKKIKMGHLI (193 aa)) is GTP cyclohydrolase II. 249–253 (RLHSA) serves as a coordination point for GTP. The Zn(2+) site is built by C254, C265, and C267. GTP is bound by residues Q270, 291-293 (EGR), and T313. Catalysis depends on D325, which acts as the Proton acceptor; for GTP cyclohydrolase activity. R327 (nucleophile; for GTP cyclohydrolase activity) is an active-site residue. Positions 348 and 353 each coordinate GTP.

In the N-terminal section; belongs to the DHBP synthase family. It in the C-terminal section; belongs to the GTP cyclohydrolase II family. Mg(2+) serves as cofactor. The cofactor is Mn(2+). Zn(2+) is required as a cofactor.

It catalyses the reaction D-ribulose 5-phosphate = (2S)-2-hydroxy-3-oxobutyl phosphate + formate + H(+). The catalysed reaction is GTP + 4 H2O = 2,5-diamino-6-hydroxy-4-(5-phosphoribosylamino)-pyrimidine + formate + 2 phosphate + 3 H(+). The protein operates within cofactor biosynthesis; riboflavin biosynthesis; 2-hydroxy-3-oxobutyl phosphate from D-ribulose 5-phosphate: step 1/1. It participates in cofactor biosynthesis; riboflavin biosynthesis; 5-amino-6-(D-ribitylamino)uracil from GTP: step 1/4. In terms of biological role, catalyzes the conversion of D-ribulose 5-phosphate to formate and 3,4-dihydroxy-2-butanone 4-phosphate. Catalyzes the conversion of GTP to 2,5-diamino-6-ribosylamino-4(3H)-pyrimidinone 5'-phosphate (DARP), formate and pyrophosphate. The polypeptide is Riboflavin biosynthesis protein RibBA (Staphylococcus aureus (strain Mu50 / ATCC 700699)).